A 1439-amino-acid polypeptide reads, in one-letter code: ABC transporter G family member 14 (1439 aa).

Over residues 1–17 the composition is skewed to basic and acidic residues; sequence MEENSNKFEQELKEIGQ. Positions 1–21 are disordered; the sequence is MEENSNKFEQELKEIGQDRNQ. The 254-residue stretch at 117–370 folds into the ABC transporter 1 domain; it reads FSILNFFKPS…FMSLGFDCEP (254 aa). Positions 475–700 constitute an ABC transmembrane type-2 1 domain; it reads LNDKFGLFTK…GSEFDAYRIC (226 aa). Helical transmembrane passes span 479–499, 516–536, 564–584, 589–609, 614–634, and 734–754; these read FGLF…SSVF, ILSA…MTFI, IPFT…MFGL, GKFF…TALF, YLCP…IFML, and IIVY…MEYI. In terms of domain architecture, ABC transporter 2 spans 805 to 1049; that stretch reads FTWQNIRYTV…LTSYFERHGV (245 aa). 841–848 contacts ATP; that stretch reads GSSGAGKT. The ABC transmembrane type-2 2 domain maps to 1141–1366; it reads YYTYGSFVQS…YNTCQNYTSA (226 aa). 6 consecutive transmembrane segments (helical) span residues 1144–1164, 1175–1195, 1217–1237, 1256–1276, 1283–1303, and 1413–1433; these read YGSF…FWNL, IFFI…VMPQ, FAIS…TIFF, FYFW…GQAV, MFFA…FSGV, and VGII…FVYL.

This sequence belongs to the ABC transporter superfamily. ABCG family. PDR (TC 3.A.1.205) subfamily.

The protein resides in the membrane. The chain is ABC transporter G family member 14 (abcG14) from Dictyostelium discoideum (Social amoeba).